The chain runs to 310 residues: Protein LRATD2 (310 aa).

The segment at 1–76 (MGNQVEKLTH…PPPQPQPYDP (76 aa)) is disordered. Residues 54–64 (PDGGGLPDGGD) show a composition bias toward gly residues. The span at 65–74 (GPPPPQPQPY) shows a compositional bias: pro residues. The region spanning 122-217 (VEFVSQAQYP…CRYGKREFKI (96 aa)) is the LRAT domain. Positions 274–310 (HPAEPEEGDSNVARTTPPPGRPPAPSSEEEDGEAVAH) are disordered. Residues 289-298 (TPPPGRPPAP) show a composition bias toward pro residues. Residues 300-310 (SEEEDGEAVAH) show a composition bias toward acidic residues.

The protein belongs to the LRATD family. Expressed in esophageal squamous cell carcinomas.

This chain is Protein LRATD2, found in Homo sapiens (Human).